Reading from the N-terminus, the 263-residue chain is Indolethylamine N-methyltransferase (263 aa).

Position 13 is an N6-succinyllysine (K13). Residues Y20, Y25, 63-64 (GS), Y69, D85, and N90 each bind S-adenosyl-L-methionine. Position 96 is an N6-succinyllysine (K96). Residues 142–143 (DA) and L163 contribute to the S-adenosyl-L-methionine site.

Belongs to the class I-like SAM-binding methyltransferase superfamily. NNMT/PNMT/TEMT family. As to quaternary structure, monomer. Highly expressed in lung, also detected in liver and at very low levels in brain.

Its subcellular location is the cytoplasm. It carries out the reaction a tertiary amine + S-adenosyl-L-methionine = a methylated tertiary amine + S-adenosyl-L-homocysteine + H(+). The catalysed reaction is a secondary amine + S-adenosyl-L-methionine = a methylated secondary amine + S-adenosyl-L-homocysteine + H(+). It catalyses the reaction a primary amine + S-adenosyl-L-methionine = a methylated primary amine + S-adenosyl-L-homocysteine + H(+). The enzyme catalyses dimethyl sulfide + S-adenosyl-L-methionine = trimethylsulfonium + S-adenosyl-L-homocysteine. Catalyzes the N-methylation of tryptamine and structurally related compounds. Functions as a thioether S-methyltransferase and is active with a variety of thioethers and the corresponding selenium and tellurium compounds, including 3-methylthiopropionaldehyde, dimethyl selenide, dimethyl telluride, 2-methylthioethylamine, 2-methylthioethanol, methyl-n-propyl sulfide and diethyl sulfide. Plays an important role in the detoxification of selenium compounds. This Oryctolagus cuniculus (Rabbit) protein is Indolethylamine N-methyltransferase (INMT).